A 106-amino-acid polypeptide reads, in one-letter code: ATP-dependent Clp protease adapter protein ClpS (106 aa).

Residues 1-14 (MTDKAGDWQEHGPQ) are compositionally biased toward basic and acidic residues. Positions 1–21 (MTDKAGDWQEHGPQVEEAPPQ) are disordered.

The protein belongs to the ClpS family. Binds to the N-terminal domain of the chaperone ClpA.

Involved in the modulation of the specificity of the ClpAP-mediated ATP-dependent protein degradation. The chain is ATP-dependent Clp protease adapter protein ClpS from Alkalilimnicola ehrlichii (strain ATCC BAA-1101 / DSM 17681 / MLHE-1).